A 120-amino-acid chain; its full sequence is Putative ankyrin repeat protein RBE_1215 (120 aa).

2 ANK repeats span residues Asp22–Ile52 and Phe59–Val88.

The chain is Putative ankyrin repeat protein RBE_1215 from Rickettsia bellii (strain RML369-C).